The primary structure comprises 117 residues: Immunoglobulin heavy variable 4-28 (117 aa).

A signal peptide spans Met-1–Ser-19. The framework-1 stretch occupies residues Gln-20–Ser-44. The 98-residue stretch at Gln-20 to Arg-117 folds into the Ig-like domain. An intrachain disulfide couples Cys-41 to Cys-115. A complementarity-determining-1 region spans residues Gly-45–Trp-53. Residues Trp-54 to Tyr-70 form a framework-2 region. Positions Ile-71–Thr-77 are complementarity-determining-2. The tract at residues Tyr-78–Cys-115 is framework-3. The complementarity-determining-3 stretch occupies residues Ala-116–Arg-117.

As to quaternary structure, immunoglobulins are composed of two identical heavy chains and two identical light chains; disulfide-linked.

It localises to the secreted. Its subcellular location is the cell membrane. V region of the variable domain of immunoglobulin heavy chains that participates in the antigen recognition. Immunoglobulins, also known as antibodies, are membrane-bound or secreted glycoproteins produced by B lymphocytes. In the recognition phase of humoral immunity, the membrane-bound immunoglobulins serve as receptors which, upon binding of a specific antigen, trigger the clonal expansion and differentiation of B lymphocytes into immunoglobulins-secreting plasma cells. Secreted immunoglobulins mediate the effector phase of humoral immunity, which results in the elimination of bound antigens. The antigen binding site is formed by the variable domain of one heavy chain, together with that of its associated light chain. Thus, each immunoglobulin has two antigen binding sites with remarkable affinity for a particular antigen. The variable domains are assembled by a process called V-(D)-J rearrangement and can then be subjected to somatic hypermutations which, after exposure to antigen and selection, allow affinity maturation for a particular antigen. In Homo sapiens (Human), this protein is Immunoglobulin heavy variable 4-28.